The following is a 614-amino-acid chain: Dihydroxy-acid dehydratase (614 aa).

Residue Asp-81 participates in Mg(2+) binding. Residue Cys-122 coordinates [2Fe-2S] cluster. Mg(2+) is bound by residues Asp-123 and Lys-124. Position 124 is an N6-carboxylysine (Lys-124). Position 195 (Cys-195) interacts with [2Fe-2S] cluster. Mg(2+) is bound at residue Glu-491. The Proton acceptor role is filled by Ser-517.

The protein belongs to the IlvD/Edd family. As to quaternary structure, homodimer. The cofactor is [2Fe-2S] cluster. Mg(2+) is required as a cofactor.

It catalyses the reaction (2R)-2,3-dihydroxy-3-methylbutanoate = 3-methyl-2-oxobutanoate + H2O. It carries out the reaction (2R,3R)-2,3-dihydroxy-3-methylpentanoate = (S)-3-methyl-2-oxopentanoate + H2O. It functions in the pathway amino-acid biosynthesis; L-isoleucine biosynthesis; L-isoleucine from 2-oxobutanoate: step 3/4. The protein operates within amino-acid biosynthesis; L-valine biosynthesis; L-valine from pyruvate: step 3/4. Functions in the biosynthesis of branched-chain amino acids. Catalyzes the dehydration of (2R,3R)-2,3-dihydroxy-3-methylpentanoate (2,3-dihydroxy-3-methylvalerate) into 2-oxo-3-methylpentanoate (2-oxo-3-methylvalerate) and of (2R)-2,3-dihydroxy-3-methylbutanoate (2,3-dihydroxyisovalerate) into 2-oxo-3-methylbutanoate (2-oxoisovalerate), the penultimate precursor to L-isoleucine and L-valine, respectively. The sequence is that of Dihydroxy-acid dehydratase from Rhodopseudomonas palustris (strain BisA53).